Here is a 238-residue protein sequence, read N- to C-terminus: tRNA (guanine-N(7)-)-methyltransferase (238 aa).

Residues E68, E93, D120, and D143 each coordinate S-adenosyl-L-methionine. The active site involves D143. Residues K147, D179, and 216 to 219 (TKFE) each bind substrate.

This sequence belongs to the class I-like SAM-binding methyltransferase superfamily. TrmB family.

It carries out the reaction guanosine(46) in tRNA + S-adenosyl-L-methionine = N(7)-methylguanosine(46) in tRNA + S-adenosyl-L-homocysteine. It functions in the pathway tRNA modification; N(7)-methylguanine-tRNA biosynthesis. Its function is as follows. Catalyzes the formation of N(7)-methylguanine at position 46 (m7G46) in tRNA. The protein is tRNA (guanine-N(7)-)-methyltransferase of Aliivibrio salmonicida (strain LFI1238) (Vibrio salmonicida (strain LFI1238)).